The sequence spans 287 residues: Toxin zeta (287 aa).

40 to 47 (GQPGSGKT) contributes to the ATP binding site. Residue Asn66 participates in substrate binding. Asp67 (proton acceptor) is an active-site residue. Substrate is bound by residues Glu100, Thr118, Arg120, and Thr128. Residues 267–287 (KLESLQPPTPPIPKTPKLPGI) are disordered. A compositionally biased stretch (pro residues) spans 273–287 (PPTPPIPKTPKLPGI).

It belongs to the zeta toxin family. In the presence of the epsilon antitoxin forms an inactive PezA(2)PezT(2) heterotetramer. The heterotetramer is still able to bind the UNAG substrate.

It carries out the reaction UDP-N-acetyl-alpha-D-glucosamine + ATP = UDP-N-acetyl-alpha-D-glucosamine 3'-phosphate + ADP + H(+). Its function is as follows. Toxic component of a type II toxin-antitoxin (TA) system. Phosphorylates UDP-N-acetyl-D-glucosamine (UNAG) on the 3'-hydroxyl group of the N-acetyl-D-glucosamine moiety, yielding UNAG-3P. UNAG-3P inhibits MurA, the first committed step in cell wall synthesis, which is then blocked. Phosphorylation is inhibited by cognate epsilon antitoxin. Part of a postsegregational killing (PSK) system involved in the killing of plasmid-free cells. The zeta toxin induces programmed cell death. The polypeptide is Toxin zeta (Streptococcus pyogenes).